Reading from the N-terminus, the 572-residue chain is Nucleolin 1 (572 aa).

Disordered regions lie at residues 1 to 312 (MGKA…ESAT) and 488 to 572 (DEAK…FGDE). Over residues 7–21 (KSVAVAVAPAAVPAK) the composition is skewed to low complexity. Over residues 27 to 38 (KREAEDEIEKAV) the composition is skewed to basic and acidic residues. Low complexity-rich tracts occupy residues 45–58 (AAAA…PAPK) and 72–81 (KAASSSSGSS). Acidic residues-rich tracts occupy residues 82–91 (SEEDSSESEE), 109–122 (SSDE…DDED), 144–156 (SESD…DEDE), 177–191 (DSSE…SDED), 208–222 (STDG…EDED), 235–247 (SDEE…ESSD), and 261–276 (ESSE…EEDE). The span at 300 to 311 (PASNQSQGTESA) shows a compositional bias: polar residues. RRM domains follow at residues 311 to 387 (ATLF…LAHE) and 411 to 492 (QSIF…EAKP). Composition is skewed to basic and acidic residues over residues 488-520 (DEAK…DRFG) and 528-545 (GGRD…DGGR). Over residues 553 to 566 (QSRQSAGTASTGKK) the composition is skewed to polar residues.

It localises to the nucleus. The protein localises to the nucleolus. In terms of biological role, involved in pre-rRNA processing and ribosome assembly. This chain is Nucleolin 1, found in Oryza sativa subsp. japonica (Rice).